Here is a 545-residue protein sequence, read N- to C-terminus: CTP synthase (545 aa).

The tract at residues 1-264 (MQYIVVTGGV…ITRLSKLLNM (264 aa)) is amidoligase domain. Ser12 is a binding site for CTP. Ser12 is a UTP binding site. 13–18 (GLGKGT) provides a ligand contact to ATP. Residue Tyr53 participates in L-glutamine binding. Asp70 is an ATP binding site. Mg(2+)-binding residues include Asp70 and Glu140. Residues 147 to 149 (DIE), 185 to 190 (KTKPTQ), and Arg221 contribute to the CTP site. Residues 185 to 190 (KTKPTQ) and Arg221 each bind UTP. In terms of domain architecture, Glutamine amidotransferase type-1 spans 294 to 527 (YVDLHDAYIS…VEQALIFKHR (234 aa)). Gly347 lines the L-glutamine pocket. The active-site Nucleophile; for glutamine hydrolysis is the Cys374. Residues 375 to 378 (LGFQ), Glu398, and Arg455 contribute to the L-glutamine site. Residues His500 and Glu502 contribute to the active site.

It belongs to the CTP synthase family. In terms of assembly, homotetramer.

The enzyme catalyses UTP + L-glutamine + ATP + H2O = CTP + L-glutamate + ADP + phosphate + 2 H(+). It carries out the reaction L-glutamine + H2O = L-glutamate + NH4(+). It catalyses the reaction UTP + NH4(+) + ATP = CTP + ADP + phosphate + 2 H(+). It participates in pyrimidine metabolism; CTP biosynthesis via de novo pathway; CTP from UDP: step 2/2. Allosterically activated by GTP, when glutamine is the substrate; GTP has no effect on the reaction when ammonia is the substrate. The allosteric effector GTP functions by stabilizing the protein conformation that binds the tetrahedral intermediate(s) formed during glutamine hydrolysis. Inhibited by the product CTP, via allosteric rather than competitive inhibition. Its function is as follows. Catalyzes the ATP-dependent amination of UTP to CTP with either L-glutamine or ammonia as the source of nitrogen. Regulates intracellular CTP levels through interactions with the four ribonucleotide triphosphates. This is CTP synthase from Thermoplasma acidophilum (strain ATCC 25905 / DSM 1728 / JCM 9062 / NBRC 15155 / AMRC-C165).